A 264-amino-acid chain; its full sequence is Somatomedin-B and thrombospondin type-1 domain-containing protein (264 aa).

An N-terminal signal peptide occupies residues 1–20 (MKTLWMVLCALARLWPGALA). The 52-residue stretch at 24–75 (EAGRCCPGRDPACFARGWRLDRVYGTCFCDQACRLTGDCCFDYDRACPARPC) folds into the SMB domain. 7 disulfides stabilise this stretch: Cys-28–Cys-36, Cys-28–Cys-52, Cys-36–Cys-70, Cys-50–Cys-52, Cys-50–Cys-63, Cys-56–Cys-62, and Cys-63–Cys-70. Residues 74–125 (PCFVGEWSPWSGCAGQCQPTTRVRRRSVRQEPLNGGAPCPPLEERAGCLEYS) enclose the TSP type-1 domain. N-linked (GlcNAc...) asparagine glycosylation is present at Asn-227.

Belongs to the thrombospondin family.

It is found in the secreted. It localises to the extracellular space. The protein localises to the extracellular matrix. In Mus musculus (Mouse), this protein is Somatomedin-B and thrombospondin type-1 domain-containing protein (Sbspon).